The primary structure comprises 733 residues: Oligopeptide transporter 8 (733 aa).

The next 14 membrane-spanning stretches (helical) occupy residues 42–62, 66–86, 115–135, 147–167, 209–229, 244–264, 281–301, 357–377, 413–433, 442–462, 531–551, 596–616, 644–664, and 677–697; these read MWVLGITACVLLSFLNQFFWY, PLTISSVSAQIAVVPIGHLMA, VLITVFANSGSGAVYATHILS, FLPALLVMITTQVLGFGWAGL, FFVITLITSFSYYLLPGYLFT, SILVNQLGSGSAGLGIGSFGL, FFASANIAAGFFLVMYVITPL, FAVTYGLGFATLSASIFHVLI, LWWFLSIFAVNLAVIVFICIY, WWGAFLACLIAIFFTPLVGVI, VGTLVAVIAYAGTAWWLMAEI, YSNINWFFVGGAIAPALVYLA, ASAVNFTSWLVMAFVFGHFVF, and VLSGGMDAGTGFMSVLLFLAL.

It belongs to the oligopeptide OPT transporter (TC 2.A.67.1) family.

The protein resides in the membrane. Functionally, may be involved in the translocation of tetra- and pentapeptides across the cellular membrane in an energy-dependent manner. The polypeptide is Oligopeptide transporter 8 (OPT8) (Arabidopsis thaliana (Mouse-ear cress)).